We begin with the raw amino-acid sequence, 186 residues long: Casparian strip membrane protein 3 (186 aa).

Residues methionine 1–serine 26 lie on the Cytoplasmic side of the membrane. The chain crosses the membrane as a helical span at residues valine 27–methionine 47. The Extracellular portion of the chain corresponds to glycine 48 to threonine 74. Asparagine 51 carries an N-linked (GlcNAc...) asparagine glycan. Residues phenylalanine 75–isoleucine 95 form a helical membrane-spanning segment. Residues valine 96–arginine 107 lie on the Cytoplasmic side of the membrane. Residues leucine 108–alanine 128 form a helical membrane-spanning segment. The Extracellular segment spans residues alanine 129–serine 161. A helical transmembrane segment spans residues leucine 162–alanine 182. The Cytoplasmic segment spans residues leucine 183–arginine 186.

The protein belongs to the Casparian strip membrane proteins (CASP) family. Homodimer and heterodimers.

It is found in the cell membrane. Regulates membrane-cell wall junctions and localized cell wall deposition. Required for establishment of the Casparian strip membrane domain (CSD) and the subsequent formation of Casparian strips, a cell wall modification of the root endodermis that determines an apoplastic barrier between the intraorganismal apoplasm and the extraorganismal apoplasm and prevents lateral diffusion. This is Casparian strip membrane protein 3 from Sorghum bicolor (Sorghum).